Reading from the N-terminus, the 374-residue chain is Pectate lyase 1 (374 aa).

The first 22 residues, 1–22 (MKYLLPSAAAGLLLLAAQPTMA), serve as a signal peptide directing secretion. The cysteines at positions 93 and 176 are disulfide-linked. 4 residues coordinate Ca(2+): D150, D152, E187, and D191. The active site involves R239. An intrachain disulfide couples C350 to C373.

This sequence belongs to the polysaccharide lyase 1 family. PLADES subfamily. It depends on Ca(2+) as a cofactor.

The protein resides in the secreted. It catalyses the reaction Eliminative cleavage of (1-&gt;4)-alpha-D-galacturonan to give oligosaccharides with 4-deoxy-alpha-D-galact-4-enuronosyl groups at their non-reducing ends.. The protein operates within glycan metabolism; pectin degradation; 2-dehydro-3-deoxy-D-gluconate from pectin: step 2/5. Involved in maceration and soft-rotting of plant tissue. The protein is Pectate lyase 1 (pel1) of Pectobacterium carotovorum (Erwinia carotovora).